The primary structure comprises 627 residues: Plastin-3 (627 aa).

2 EF-hand domains span residues 8-43 (EELEELREAFGKVDLNGNGFICDHELHDLFKEANLP) and 48-83 (KVREIIQKLMEEGDKNKDNMISFDEFVSIFQELKSG). Residues D21, N23, N25, E32, D61, N63, D65, M67, and E72 each contribute to the Ca(2+) site. Actin-binding regions lie at residues 105 to 378 (TSEL…ALTK) and 379 to 624 (PENQ…GRGM). Calponin-homology (CH) domains lie at 119-235 (EEER…KIGL), 263-374 (LSPE…NKYP), 393-503 (TREE…RRYT), and 515-624 (KVND…GRGM).

Its subcellular location is the cytoplasm. In terms of biological role, actin-bundling protein. The protein is Plastin-3 (pls3) of Danio rerio (Zebrafish).